Reading from the N-terminus, the 854-residue chain is Zinc finger protein 341 (854 aa).

A C2H2-type 1; atypical zinc finger spans residues Phe53 to Cys76. Residues Asp152 to Val217 are disordered. Residues Gln163–Thr176 are compositionally biased toward polar residues. Pro residues predominate over residues Gln177–Pro210. C2H2-type zinc fingers lie at residues Leu322 to His344 and Phe350 to His372. Residues Ser399 to Glu434 are disordered. The segment covering Gly408–Leu422 has biased composition (low complexity). 9 consecutive C2H2-type zinc fingers follow at residues Tyr445–His467, Tyr473–His497, Tyr503–His525, Tyr540–His564, Phe566–His588, Phe594–His616, Tyr622–His644, Tyr650–His677, and His683–His705. Residues Cys731–Val763 form a disordered region.

It belongs to the krueppel C2H2-type zinc-finger protein family. In terms of assembly, binds DNA and to the STAT3 promoter.

The protein resides in the nucleus. Transcriptional activator of STAT3 involved in the regulation of immune homeostasis. Also able to activate STAT1 transcription. This chain is Zinc finger protein 341 (ZNF341), found in Homo sapiens (Human).